The chain runs to 71 residues: Small ribosomal subunit protein bS18 (71 aa).

The protein belongs to the bacterial ribosomal protein bS18 family. As to quaternary structure, part of the 30S ribosomal subunit. Forms a tight heterodimer with protein bS6.

Functionally, binds as a heterodimer with protein bS6 to the central domain of the 16S rRNA, where it helps stabilize the platform of the 30S subunit. This chain is Small ribosomal subunit protein bS18, found in Dichelobacter nodosus (strain VCS1703A).